A 121-amino-acid polypeptide reads, in one-letter code: Darcynin homolog (121 aa).

Belongs to the darcynin family.

In Streptomyces avermitilis (strain ATCC 31267 / DSM 46492 / JCM 5070 / NBRC 14893 / NCIMB 12804 / NRRL 8165 / MA-4680), this protein is Darcynin homolog.